Here is a 493-residue protein sequence, read N- to C-terminus: Glycerol kinase (493 aa).

Threonine 11 is a binding site for ADP. Positions 11, 12, and 13 each coordinate ATP. Threonine 11 lines the sn-glycerol 3-phosphate pocket. Arginine 15 contacts ADP. Sn-glycerol 3-phosphate is bound by residues arginine 80, glutamate 81, tyrosine 132, and aspartate 241. Arginine 80, glutamate 81, tyrosine 132, aspartate 241, and glutamine 242 together coordinate glycerol. 2 residues coordinate ADP: threonine 263 and glycine 306. Residues threonine 263, glycine 306, glutamine 310, and glycine 408 each coordinate ATP. Glycine 408 contributes to the ADP binding site.

It belongs to the FGGY kinase family.

It carries out the reaction glycerol + ATP = sn-glycerol 3-phosphate + ADP + H(+). It functions in the pathway polyol metabolism; glycerol degradation via glycerol kinase pathway; sn-glycerol 3-phosphate from glycerol: step 1/1. Inhibited by fructose 1,6-bisphosphate (FBP). Functionally, key enzyme in the regulation of glycerol uptake and metabolism. Catalyzes the phosphorylation of glycerol to yield sn-glycerol 3-phosphate. The chain is Glycerol kinase from Cereibacter sphaeroides (strain ATCC 17029 / ATH 2.4.9) (Rhodobacter sphaeroides).